Here is a 688-residue protein sequence, read N- to C-terminus: Elongation factor G 2 (688 aa).

Residues 7–282 form the tr-type G domain; sequence DSIRNIGIIS…AVAAYLPSPR (276 aa). Residues 16 to 23, 80 to 84, and 134 to 137 contribute to the GTP site; these read SHIDAGKT, DTPGH, and NKMD.

Belongs to the TRAFAC class translation factor GTPase superfamily. Classic translation factor GTPase family. EF-G/EF-2 subfamily.

The protein localises to the cytoplasm. Functionally, catalyzes the GTP-dependent ribosomal translocation step during translation elongation. During this step, the ribosome changes from the pre-translocational (PRE) to the post-translocational (POST) state as the newly formed A-site-bound peptidyl-tRNA and P-site-bound deacylated tRNA move to the P and E sites, respectively. Catalyzes the coordinated movement of the two tRNA molecules, the mRNA and conformational changes in the ribosome. This is Elongation factor G 2 from Geobacter metallireducens (strain ATCC 53774 / DSM 7210 / GS-15).